The sequence spans 443 residues: Exodeoxyribonuclease 7 large subunit (443 aa).

Belongs to the XseA family. Heterooligomer composed of large and small subunits.

It is found in the cytoplasm. It carries out the reaction Exonucleolytic cleavage in either 5'- to 3'- or 3'- to 5'-direction to yield nucleoside 5'-phosphates.. Bidirectionally degrades single-stranded DNA into large acid-insoluble oligonucleotides, which are then degraded further into small acid-soluble oligonucleotides. The protein is Exodeoxyribonuclease 7 large subunit of Vibrio vulnificus (strain YJ016).